The chain runs to 319 residues: Probable murein peptide carboxypeptidase (319 aa).

Ser116 functions as the Nucleophile in the catalytic mechanism. Active-site charge relay system residues include Glu214 and His284.

It belongs to the peptidase S66 family.

The protein resides in the cytoplasm. It participates in cell wall degradation; peptidoglycan degradation. Functionally, may be involved in the degradation of peptidoglycan by catalyzing the cleavage of the terminal D-alanine residue from cytoplasmic murein peptides. This is Probable murein peptide carboxypeptidase (ykfA) from Bacillus subtilis (strain 168).